The chain runs to 649 residues: ATP-dependent zinc metalloprotease FtsH (649 aa).

Residues 1-18 are Cytoplasmic-facing; sequence MQCSYPLARQLERSSALN. A helical transmembrane segment spans residues 19–39; that stretch reads NNLFQKAAIWLVIALVLFTVF. At 40 to 115 the chain is on the periplasmic side; the sequence is KQFDKPRAQD…VTGKADDEPN (76 aa). A helical transmembrane segment spans residues 116–136; sequence VLVQALYYLGPTLLIIVFWFY. At 137–649 the chain is on the cytoplasmic side; it reads MMRQMQGGGK…PATARADETV (513 aa). ATP is bound at residue 210–217; that stretch reads GPPGTGKT. A Zn(2+)-binding site is contributed by His432. Glu433 is a catalytic residue. Zn(2+) contacts are provided by His436 and Asp508. The interval 606 to 649 is disordered; the sequence is IMAGRPPRPPRGAQGPNSGGNTPPGGSPVAPTNAPATARADETV. Over residues 616-626 the composition is skewed to low complexity; it reads RGAQGPNSGGN.

In the central section; belongs to the AAA ATPase family. It in the C-terminal section; belongs to the peptidase M41 family. Homohexamer. Requires Zn(2+) as cofactor.

It localises to the cell inner membrane. Acts as a processive, ATP-dependent zinc metallopeptidase for both cytoplasmic and membrane proteins. Plays a role in the quality control of integral membrane proteins. This Cupriavidus metallidurans (strain ATCC 43123 / DSM 2839 / NBRC 102507 / CH34) (Ralstonia metallidurans) protein is ATP-dependent zinc metalloprotease FtsH.